A 598-amino-acid chain; its full sequence is Centrosomal protein of 70 kDa (598 aa).

Residues 16–38 (DSTKEPLSTVTSQAQDSSLSANR) show a composition bias toward polar residues. A disordered region spans residues 16–43 (DSTKEPLSTVTSQAQDSSLSANRPVTEK). Coiled coils occupy residues 99–210 (TRQQ…EEDR) and 255–317 (TYKG…NIKL). A TPR repeat occupies 484 to 517 (NGVYPRMNEVYARLGEMNNAVRNLQELLGLDSSS).

As to quaternary structure, directly interacts with tubulin-gamma; this interaction determines centrosomal localization.

The protein localises to the cytoplasm. It localises to the cytoskeleton. The protein resides in the microtubule organizing center. Its subcellular location is the centrosome. Its function is as follows. Plays a role in the organization of both preexisting and nascent microtubules in interphase cells. During mitosis, required for the organization and orientation of the mitotic spindle. In Rattus norvegicus (Rat), this protein is Centrosomal protein of 70 kDa (Cep70).